We begin with the raw amino-acid sequence, 385 residues long: Cell division protein FtsZ (385 aa).

GTP is bound by residues 37–41 (GGGSN), 125–127 (GTG), E156, K160, and D204.

This sequence belongs to the FtsZ family. In terms of assembly, homodimer. Polymerizes to form a dynamic ring structure in a strictly GTP-dependent manner. Interacts directly with several other division proteins.

The protein resides in the cytoplasm. Its function is as follows. Essential cell division protein that forms a contractile ring structure (Z ring) at the future cell division site. The regulation of the ring assembly controls the timing and the location of cell division. One of the functions of the FtsZ ring is to recruit other cell division proteins to the septum to produce a new cell wall between the dividing cells. Binds GTP and shows GTPase activity. In Helicobacter pylori (strain ATCC 700392 / 26695) (Campylobacter pylori), this protein is Cell division protein FtsZ.